Here is a 595-residue protein sequence, read N- to C-terminus: UvrABC system protein C (595 aa).

One can recognise a GIY-YIG domain in the interval Asn14–Ile91. A UVR domain is found at Asp196–Leu231.

It belongs to the UvrC family. Interacts with UvrB in an incision complex.

It is found in the cytoplasm. Its function is as follows. The UvrABC repair system catalyzes the recognition and processing of DNA lesions. UvrC both incises the 5' and 3' sides of the lesion. The N-terminal half is responsible for the 3' incision and the C-terminal half is responsible for the 5' incision. The chain is UvrABC system protein C from Streptococcus thermophilus (strain ATCC BAA-250 / LMG 18311).